Here is a 379-residue protein sequence, read N- to C-terminus: Succinyl-diaminopimelate desuccinylase (379 aa).

A Zn(2+)-binding site is contributed by H70. Residue D72 is part of the active site. Residue D103 coordinates Zn(2+). Catalysis depends on E137, which acts as the Proton acceptor. Residues E138, E166, and H352 each contribute to the Zn(2+) site.

This sequence belongs to the peptidase M20A family. DapE subfamily. In terms of assembly, homodimer. Zn(2+) serves as cofactor. It depends on Co(2+) as a cofactor.

It catalyses the reaction N-succinyl-(2S,6S)-2,6-diaminopimelate + H2O = (2S,6S)-2,6-diaminopimelate + succinate. The protein operates within amino-acid biosynthesis; L-lysine biosynthesis via DAP pathway; LL-2,6-diaminopimelate from (S)-tetrahydrodipicolinate (succinylase route): step 3/3. Its function is as follows. Catalyzes the hydrolysis of N-succinyl-L,L-diaminopimelic acid (SDAP), forming succinate and LL-2,6-diaminopimelate (DAP), an intermediate involved in the bacterial biosynthesis of lysine and meso-diaminopimelic acid, an essential component of bacterial cell walls. In Burkholderia ambifaria (strain ATCC BAA-244 / DSM 16087 / CCUG 44356 / LMG 19182 / AMMD) (Burkholderia cepacia (strain AMMD)), this protein is Succinyl-diaminopimelate desuccinylase.